We begin with the raw amino-acid sequence, 182 residues long: Large ribosomal subunit protein uL16 (182 aa).

This sequence belongs to the universal ribosomal protein uL16 family.

This Pyrobaculum neutrophilum (strain DSM 2338 / JCM 9278 / NBRC 100436 / V24Sta) (Thermoproteus neutrophilus) protein is Large ribosomal subunit protein uL16.